The primary structure comprises 448 residues: Trigger factor (448 aa).

The 86-residue stretch at Gly172–Pro257 folds into the PPIase FKBP-type domain.

Belongs to the FKBP-type PPIase family. Tig subfamily.

Its subcellular location is the cytoplasm. It carries out the reaction [protein]-peptidylproline (omega=180) = [protein]-peptidylproline (omega=0). In terms of biological role, involved in protein export. Acts as a chaperone by maintaining the newly synthesized protein in an open conformation. Functions as a peptidyl-prolyl cis-trans isomerase. The polypeptide is Trigger factor (Burkholderia cenocepacia (strain HI2424)).